A 231-amino-acid chain; its full sequence is Thermonuclease (231 aa).

Positions 1-26 (MLVMTEYLLSAGICMAIVSILLIGMA) are cleaved as a signal peptide. Propeptides lie at residues 27-63 (ISNV…SANA) and 64-82 (SQTD…TVYS). The segment covering 61–73 (ANASQTDNGVNRS) has biased composition (polar residues). The tract at residues 61–86 (ANASQTDNGVNRSGSEDPTVYSATST) is disordered. Aspartate 103 is a binding site for Ca(2+). Residue arginine 117 is part of the active site. Ca(2+)-binding residues include aspartate 122 and threonine 123. Residues glutamate 125 and arginine 169 contribute to the active site. The segment covering 203–219 (HEQHLRKSEAQAKKEKL) has biased composition (basic and acidic residues). A disordered region spans residues 203 to 231 (HEQHLRKSEAQAKKEKLNIWSEDNADSGQ).

The protein belongs to the thermonuclease family. Requires Ca(2+) as cofactor.

The protein resides in the secreted. It is found in the membrane. It catalyses the reaction Endonucleolytic cleavage to nucleoside 3'-phosphates and 3'-phosphooligonucleotide end-products.. Functionally, enzyme that catalyzes the hydrolysis of both DNA and RNA at the 5' position of the phosphodiester bond. The polypeptide is Thermonuclease (Staphylococcus aureus).